We begin with the raw amino-acid sequence, 1101 residues long: Rho GTPase-activating protein 30 (1101 aa).

One can recognise a Rho-GAP domain in the interval cysteine 20–phenylalanine 215. 2 disordered regions span residues arginine 305 to leucine 397 and leucine 450 to serine 499. Basic and acidic residues predominate over residues leucine 309 to serine 319. Positions serine 348–glutamate 367 are enriched in low complexity. Over residues glutamine 451–serine 465 the composition is skewed to pro residues. Serine 578 carries the post-translational modification Phosphoserine. Residues leucine 622–glutamate 848 form a disordered region. Composition is skewed to basic and acidic residues over residues threonine 659 to alanine 677, glutamate 686 to aspartate 762, glutamate 786 to aspartate 821, and aspartate 829 to aspartate 844. Serine 875 bears the Phosphoserine mark. Disordered stretches follow at residues glutamate 878–alanine 901 and cysteine 968–alanine 987. The residue at position 996 (serine 996) is a Phosphoserine. The interval serine 1044 to valine 1076 is disordered. Basic and acidic residues predominate over residues arginine 1052–serine 1064.

As to quaternary structure, interacts with RHOU in a GTP-independent manner.

It localises to the cytoplasmic vesicle. Functionally, GTPase-activating protein (GAP) for RAC1 and RHOA, but not for CDC42. The polypeptide is Rho GTPase-activating protein 30 (Arhgap30) (Mus musculus (Mouse)).